Reading from the N-terminus, the 115-residue chain is Large ribosomal subunit protein bL19 (115 aa).

The protein belongs to the bacterial ribosomal protein bL19 family.

In terms of biological role, this protein is located at the 30S-50S ribosomal subunit interface and may play a role in the structure and function of the aminoacyl-tRNA binding site. The chain is Large ribosomal subunit protein bL19 from Streptococcus pneumoniae serotype 2 (strain D39 / NCTC 7466).